The following is a 317-amino-acid chain: Flavin-dependent thymidylate synthase (317 aa).

Residue Ser-46 coordinates FAD. Positions 55-166 are insert; it reads FEWKKEKWIE…ELETDMDFYT (112 aa). Positions 100–317 constitute a ThyX domain; sequence AVKERIKEAF…YRGTDKKNVI (218 aa). Residues 178–181, 189–193, and Arg-259 contribute to the dUMP site; these read QWMR and EVSKR. FAD-binding positions include 181–183 and Glu-189; that span reads RHR. The ThyX motif signature appears at 181-191; it reads RHRFGSYNEVS. Asn-281 lines the FAD pocket. A dUMP-binding site is contributed by Arg-286. Residue Arg-286 is the Involved in ionization of N3 of dUMP, leading to its activation of the active site.

It belongs to the thymidylate synthase ThyX family. Homotetramer. The cofactor is FAD.

It carries out the reaction dUMP + (6R)-5,10-methylene-5,6,7,8-tetrahydrofolate + NADPH + H(+) = dTMP + (6S)-5,6,7,8-tetrahydrofolate + NADP(+). The protein operates within pyrimidine metabolism; dTTP biosynthesis. Its function is as follows. Catalyzes the reductive methylation of 2'-deoxyuridine-5'-monophosphate (dUMP) to 2'-deoxythymidine-5'-monophosphate (dTMP) while utilizing 5,10-methylenetetrahydrofolate (mTHF) as the methyl donor, and NADPH and FADH(2) as the reductant. The sequence is that of Flavin-dependent thymidylate synthase from Aquifex aeolicus (strain VF5).